We begin with the raw amino-acid sequence, 161 residues long: Cyclic pyranopterin monophosphate synthase (161 aa).

Residues 75-77 and 113-114 each bind substrate; these read LCH and ME. Residue Asp128 is part of the active site.

This sequence belongs to the MoaC family. In terms of assembly, homohexamer; trimer of dimers.

The enzyme catalyses (8S)-3',8-cyclo-7,8-dihydroguanosine 5'-triphosphate = cyclic pyranopterin phosphate + diphosphate. Its pathway is cofactor biosynthesis; molybdopterin biosynthesis. Functionally, catalyzes the conversion of (8S)-3',8-cyclo-7,8-dihydroguanosine 5'-triphosphate to cyclic pyranopterin monophosphate (cPMP). This Salmonella arizonae (strain ATCC BAA-731 / CDC346-86 / RSK2980) protein is Cyclic pyranopterin monophosphate synthase.